The following is a 518-amino-acid chain: Beta-secretase 2 (518 aa).

The first 20 residues, 1-20 (MGALARALLLPLLAQWLLRA), serve as a signal peptide directing secretion. The propeptide occupies 21–62 (APELAPAPFTLPLRVAAATNRVVAPTPGPGTPAERHADGLAL). Topologically, residues 21 to 473 (APELAPAPFT…SEPILWIVSY (453 aa)) are extracellular. The Peptidase A1 domain maps to 92–429 (YYLEMLIGTP…DRAQKRVGFA (338 aa)). The active site involves D110. N-linked (GlcNAc...) asparagine glycosylation is present at N170. Intrachain disulfides connect C233-C433, C292-C457, and C344-C393. D303 is an active-site residue. N-linked (GlcNAc...) asparagine glycosylation is present at N366. The chain crosses the membrane as a helical span at residues 474 to 494 (ALMSVCGAILLVLIVLLLLPF). Over 495–518 (RCQRRPRDPEVVNDESSLVRHRWK) the chain is Cytoplasmic.

It belongs to the peptidase A1 family. Monomer. Interacts with RTN3 and RTN4. Post-translationally, undergoes autoproteolytic cleavage. In terms of processing, glycosylated. Brain. Present in neurons within the hippocampus, frontal cortex and temporal cortex (at protein level). Expressed at low levels in most peripheral tissues and at higher levels in colon, kidney, pancreas, placenta, prostate, stomach and trachea. Expressed at low levels in the brain. Found in spinal cord, medulla oblongata, substantia nigra and locus coruleus. Expressed in the ductal epithelium of both normal and malignant prostate.

The protein resides in the cell membrane. Its subcellular location is the golgi apparatus. The protein localises to the endoplasmic reticulum. It localises to the endosome. It is found in the melanosome. The catalysed reaction is Broad endopeptidase specificity. Cleaves Glu-Val-Asn-Leu-|-Asp-Ala-Glu-Phe in the Swedish variant of Alzheimer's amyloid precursor protein.. In terms of biological role, responsible for the proteolytic processing of the amyloid precursor protein (APP). Cleaves APP, between residues 690 and 691, leading to the generation and extracellular release of beta-cleaved soluble APP, and a corresponding cell-associated C-terminal fragment which is later released by gamma-secretase. It has also been shown that it can cleave APP between residues 671 and 672. Involved in the proteolytic shedding of PMEL at early stages of melanosome biogenesis. Cleaves PMEL within the M-beta fragment to release the amyloidogenic PMEL luminal fragment containing M-alpha and a small portion of M-beta N-terminus. This is a prerequisite step for subsequent processing and assembly of PMEL fibrils into amyloid sheets. Responsible also for the proteolytic processing of CLTRN in pancreatic beta cells. This chain is Beta-secretase 2 (BACE2), found in Homo sapiens (Human).